The sequence spans 349 residues: Small ribosomal subunit biogenesis GTPase RsgA 2 (349 aa).

Residues 97 to 252 (AEQLIATNVD…IIDTPGMREL (156 aa)) form the CP-type G domain. GTP-binding positions include 142 to 145 (TKAD) and 194 to 202 (GSSGVGKST). Positions 275, 280, 282, and 288 each coordinate Zn(2+).

This sequence belongs to the TRAFAC class YlqF/YawG GTPase family. RsgA subfamily. In terms of assembly, monomer. Associates with 30S ribosomal subunit, binds 16S rRNA. Zn(2+) serves as cofactor.

It localises to the cytoplasm. In terms of biological role, one of several proteins that assist in the late maturation steps of the functional core of the 30S ribosomal subunit. Helps release RbfA from mature subunits. May play a role in the assembly of ribosomal proteins into the subunit. Circularly permuted GTPase that catalyzes slow GTP hydrolysis, GTPase activity is stimulated by the 30S ribosomal subunit. The sequence is that of Small ribosomal subunit biogenesis GTPase RsgA 2 from Vibrio vulnificus (strain CMCP6).